A 490-amino-acid polypeptide reads, in one-letter code: MKQHSVGRVETKTFAINDKLKLSSGKTLENVELAYETYGELNTAKTNAILVCHALTGDAHAAGWHKNATKPGWWEIVIGPGKALDTDKYFVICSNVLGGCKGSTGPASINPKTNEEYALDFPIITIEDMVHAQKKLIEHLGIEKLHAVVGGSMGGMQALQWTVSYPNMMKKASIIATTARSSPQQIAFNEVGRQSIISDPFWNNGQYYGKNRTPRSGLAVARMIGHITYLSDESMYIKFGRELQDKDQLSYDFTLDFQVESYLHHQGESFVKRFDANSYLYITKAVDYFDLSVDGSLPDGLKNVKAKFQIIAVDSDWLYPVDQSKDLLTALQTLGVEVSYNEVKSDYGHDAFLLENGQMNFLLNNFLSENVVDDLMKTDVPTIDINSTIKDAANIMFDNQVTHLPVVDENDKLLGIVTAWDLSKSIAKDCKLLEDVMTKDVRYCKSTDSIEYISRQMKKFDISCLPVVNDDLCLEGIITTDQISHLISSY.

Residues Asn-47–Glu-355 form the AB hydrolase-1 domain. Catalysis depends on Ser-152, which acts as the Nucleophile. A substrate-binding site is contributed by Arg-222. Catalysis depends on residues Asp-316 and His-349. Residue Asp-350 coordinates substrate. CBS domains are found at residues Met-376–Val-436 and Met-437–Tyr-490.

The protein belongs to the AB hydrolase superfamily. MetX family. As to quaternary structure, homodimer.

Its subcellular location is the cytoplasm. The enzyme catalyses L-homoserine + acetyl-CoA = O-acetyl-L-homoserine + CoA. It functions in the pathway amino-acid biosynthesis; L-methionine biosynthesis via de novo pathway; O-acetyl-L-homoserine from L-homoserine: step 1/1. Transfers an acetyl group from acetyl-CoA to L-homoserine, forming acetyl-L-homoserine. The protein is Homoserine O-acetyltransferase of Methanobrevibacter ruminantium (strain ATCC 35063 / DSM 1093 / JCM 13430 / OCM 146 / M1) (Methanobacterium ruminantium).